We begin with the raw amino-acid sequence, 285 residues long: Hydroxyethylthiazole kinase (285 aa).

Substrate is bound at residue Met-43. Positions 119 and 172 each coordinate ATP. A substrate-binding site is contributed by Gly-199.

Belongs to the Thz kinase family. It depends on Mg(2+) as a cofactor.

It catalyses the reaction 5-(2-hydroxyethyl)-4-methylthiazole + ATP = 4-methyl-5-(2-phosphooxyethyl)-thiazole + ADP + H(+). Its pathway is cofactor biosynthesis; thiamine diphosphate biosynthesis; 4-methyl-5-(2-phosphoethyl)-thiazole from 5-(2-hydroxyethyl)-4-methylthiazole: step 1/1. In terms of biological role, catalyzes the phosphorylation of the hydroxyl group of 4-methyl-5-beta-hydroxyethylthiazole (THZ). The protein is Hydroxyethylthiazole kinase of Desulfovibrio desulfuricans (strain ATCC 27774 / DSM 6949 / MB).